The following is a 451-amino-acid chain: MEEKPAGRRVVLVAVPAQGHISPIMQLAKTLHLKGFSITIAQTKFNYFSPSDDFTDFQFVTIPESLPESDFEDLGPIEFLHKLNKECQVSFKDCLGQLLLQQGNEIACVVYDEFMYFAEAAAKEFKLPNVIFSTTSATAFVCRSAFDKLYANSILTPLKEPKGQQNELVPEFHPLRCKDFPVSHWASLESMMELYRNTVDKRTASSVIINTASCLESSSLSRLQQQLQIPVYPIGPLHLVASASTSLLEENKSCIEWLNKQKKNSVIFVSLGSLALMEINEVIETALGLDSSKQQFLWVIRPGSVRGSEWIENLPKEFSKIISGRGYIVKWAPQKEVLSHPAVGGFWSHCGWNSTLESIGEGVPMICKPFSSDQMVNARYLECVWKIGIQVEGDLDRGAVERAVRRLMVEEEGEGMRKRAISLKEQLRASVISGGSSHNSLEEFVHYMRTL.

Residues serine 273, 332–334, 349–357, and 371–374 contribute to the UDP-alpha-D-glucose site; these read APQ, HCGWNSTLE, and SSDQ.

Belongs to the UDP-glycosyltransferase family.

Possesses low quercetin 3-O-glucosyltransferase and 7-O-glucosyltransferase activities in vitro. The chain is UDP-glycosyltransferase 76E11 (UGT76E11) from Arabidopsis thaliana (Mouse-ear cress).